The sequence spans 308 residues: Apolipoprotein E (308 aa).

A signal peptide spans 1–18 (MKFLWAALVVTLLAGCRA). Tandem repeats lie at residues 75–96 (LLIEETMKEVKAYKEELEKQVG), 97–118 (PIAQETQARLSKELQAAQARLE), 119–140 (SDMEDVRTRLAQYRSEAQAALG), 141–162 (QNTDDLQGRLASHLRKLRKRLL), 163–184 (RDAEDLQKRLAVYQAGTHEAAE), 185–206 (RGVSAIHERLGPLMMEGPLQAI), 207–224 (PPSQQLRERAEAWGQKVR), and 225–246 (GRLESVGSQARDRLDDMRDQME). Residues 75–246 (LLIEETMKEV…RLDDMRDQME (172 aa)) are 8 X 22 AA approximate tandem repeats. An LDL and other lipoprotein receptors binding region spans residues 153–163 (HLRKLRKRLLR). Residue 157–160 (LRKR) participates in heparin binding. The tract at residues 205-281 (AIPPSQQLRE…SWFEPLVQDM (77 aa)) is lipid-binding and lipoprotein association. 220 to 227 (GQKVRGRL) serves as a coordination point for heparin. Residues 257 to 308 (SQVRLQAEAFQTRLKSWFEPLVQDMQRQWASLVEKVQSTLGISPSTKPSKTK) are homooligomerization. The specificity for association with VLDL stretch occupies residues 269–281 (RLKSWFEPLVQDM).

This sequence belongs to the apolipoprotein A1/A4/E family. In terms of assembly, homotetramer. May interact with ABCA1; functionally associated with ABCA1 in the biogenesis of HDLs. May interact with APP/A4 amyloid-beta peptide; the interaction is extremely stable in vitro but its physiological significance is unclear. May interact with MAPT. May interact with MAP2. In the cerebrospinal fluid, interacts with secreted SORL1. Interacts with PMEL; this allows the loading of PMEL luminal fragment on ILVs to induce fibril nucleation. In terms of processing, APOE exists as multiple glycosylated and sialylated glycoforms within cells and in plasma. The extent of glycosylation and sialylation are tissue and context specific. Post-translationally, glycated in plasma VLDL. Phosphorylated by FAM20C in the extracellular medium.

It is found in the secreted. The protein resides in the extracellular space. It localises to the extracellular matrix. The protein localises to the extracellular vesicle. Its subcellular location is the endosome. It is found in the multivesicular body. Functionally, APOE is an apolipoprotein, a protein associating with lipid particles, that mainly functions in lipoprotein-mediated lipid transport between organs via the plasma and interstitial fluids. APOE is a core component of plasma lipoproteins and is involved in their production, conversion and clearance. Apolipoproteins are amphipathic molecules that interact both with lipids of the lipoprotein particle core and the aqueous environment of the plasma. As such, APOE associates with chylomicrons, chylomicron remnants, very low density lipoproteins (VLDL) and intermediate density lipoproteins (IDL) but shows a preferential binding to high-density lipoproteins (HDL). It also binds a wide range of cellular receptors including the LDL receptor/LDLR and the very low-density lipoprotein receptor/VLDLR that mediate the cellular uptake of the APOE-containing lipoprotein particles. Finally, APOE also has a heparin-binding activity and binds heparan-sulfate proteoglycans on the surface of cells, a property that supports the capture and the receptor-mediated uptake of APOE-containing lipoproteins by cells. This chain is Apolipoprotein E (APOE), found in Pteropus pselaphon (Bonin flying fox).